Reading from the N-terminus, the 92-residue chain is Small ribosomal subunit protein uS19 (92 aa).

It belongs to the universal ribosomal protein uS19 family.

In terms of biological role, protein S19 forms a complex with S13 that binds strongly to the 16S ribosomal RNA. The protein is Small ribosomal subunit protein uS19 of Corynebacterium kroppenstedtii (strain DSM 44385 / JCM 11950 / CIP 105744 / CCUG 35717).